Here is a 746-residue protein sequence, read N- to C-terminus: tRNA(Met) cytidine acetyltransferase TmcA (746 aa).

Positions Ala181–Glu200 are disordered. Residues Gln202, Gly228–Ile237, and Arg370 contribute to the ATP site. Residues Val405–Pro617 form the N-acetyltransferase domain. Residues Ile517–Val519, Gln524–Thr530, Glu557, and Arg564 contribute to the acetyl-CoA site.

This sequence belongs to the RNA cytidine acetyltransferase family. TmcA subfamily.

The protein localises to the cytoplasm. The enzyme catalyses cytidine(34) in elongator tRNA(Met) + acetyl-CoA + ATP + H2O = N(4)-acetylcytidine(34) in elongator tRNA(Met) + ADP + phosphate + CoA + H(+). In terms of biological role, catalyzes the formation of N(4)-acetylcytidine (ac(4)C) at the wobble position of tRNA(Met), by using acetyl-CoA as an acetyl donor and ATP (or GTP). This is tRNA(Met) cytidine acetyltransferase TmcA from Nitrosococcus halophilus (strain Nc4).